The sequence spans 395 residues: S-adenosylmethionine synthase (395 aa).

Residue His16 coordinates ATP. Asp18 is a Mg(2+) binding site. Glu44 is a K(+) binding site. 2 residues coordinate L-methionine: Glu57 and Gln100. The interval 100–110 (QSPDIAQGVDR) is flexible loop. ATP-binding positions include 167-169 (DAK), 233-234 (RF), Asp242, 248-249 (RK), Ala265, and Lys269. Asp242 contributes to the L-methionine binding site. Lys273 serves as a coordination point for L-methionine.

It belongs to the AdoMet synthase family. Homotetramer; dimer of dimers. The cofactor is Mg(2+). It depends on K(+) as a cofactor.

The protein resides in the cytoplasm. The enzyme catalyses L-methionine + ATP + H2O = S-adenosyl-L-methionine + phosphate + diphosphate. The protein operates within amino-acid biosynthesis; S-adenosyl-L-methionine biosynthesis; S-adenosyl-L-methionine from L-methionine: step 1/1. In terms of biological role, catalyzes the formation of S-adenosylmethionine (AdoMet) from methionine and ATP. The overall synthetic reaction is composed of two sequential steps, AdoMet formation and the subsequent tripolyphosphate hydrolysis which occurs prior to release of AdoMet from the enzyme. In Burkholderia mallei (strain NCTC 10247), this protein is S-adenosylmethionine synthase.